Reading from the N-terminus, the 512-residue chain is Protein spinster homolog 3 (512 aa).

The tract at residues 1–30 (MAGGMSAECPEPGPGGLQGQSPGPGRQCPP) is disordered. Helical transmembrane passes span 50 to 70 (VLCY…GVLL), 84 to 104 (GLLQ…FGYL), 112 to 132 (ATMS…SFIS), 145 to 165 (IVGT…GDLF), 173 to 193 (VLAV…VLGS), 204 to 224 (WALR…ILLV), 260 to 280 (FVWS…LGFW), 309 to 329 (LIFG…GAEA), 343 to 365 (LICA…LAPT), 377 to 397 (GELL…SVVV), 411 to 431 (VGHI…SSVL), and 450 to 470 (FLCC…TALY). The tract at residues 481-512 (PVTGTPDSNDVDSNDLERQGLLSGAGASTEEP) is disordered.

It belongs to the major facilitator superfamily. Spinster (TC 2.A.1.49) family.

Its subcellular location is the membrane. Sphingolipid transporter. The chain is Protein spinster homolog 3 (SPNS3) from Homo sapiens (Human).